A 254-amino-acid chain; its full sequence is uncharacterized protein (254 aa).

One can recognise an S4 RNA-binding domain in the interval 14-81 (IRLQKVLSQA…DSLVYLALNK (68 aa)). Asp119 functions as the Nucleophile in the catalytic mechanism.

Belongs to the pseudouridine synthase RsuA family.

The enzyme catalyses a uridine in RNA = a pseudouridine in RNA. This is an uncharacterized protein from Mycobacterium bovis (strain ATCC BAA-935 / AF2122/97).